Consider the following 136-residue polypeptide: Large ribosomal subunit protein uL16 (136 aa).

The protein belongs to the universal ribosomal protein uL16 family. Part of the 50S ribosomal subunit.

In terms of biological role, binds 23S rRNA and is also seen to make contacts with the A and possibly P site tRNAs. The chain is Large ribosomal subunit protein uL16 from Shewanella woodyi (strain ATCC 51908 / MS32).